A 530-amino-acid chain; its full sequence is UDP-N-acetylmuramoyl-L-alanyl-D-glutamate--2,6-diaminopimelate ligase (530 aa).

Ser-21 lines the UDP-N-acetyl-alpha-D-muramoyl-L-alanyl-D-glutamate pocket. Residue 99–105 (GTNGKSS) coordinates ATP. UDP-N-acetyl-alpha-D-muramoyl-L-alanyl-D-glutamate is bound by residues 145-146 (TT), Ser-172, Gln-178, and Arg-180. Lys-212 bears the N6-carboxylysine mark. The 49-residue stretch at 221-269 (FKPAYREEFKGDTEHSTTAYILVREDASTGSTSKLLLEAKFGKMSTEYL) folds into the RPE1 insert domain. Meso-2,6-diaminopimelate-binding positions include Arg-422, 446-449 (DNPR), Gly-496, and Glu-500. A Meso-diaminopimelate recognition motif motif is present at residues 446–449 (DNPR).

The protein belongs to the MurCDEF family. MurE subfamily. Requires Mg(2+) as cofactor. Carboxylation is probably crucial for Mg(2+) binding and, consequently, for the gamma-phosphate positioning of ATP.

The protein localises to the cytoplasm. It catalyses the reaction UDP-N-acetyl-alpha-D-muramoyl-L-alanyl-D-glutamate + meso-2,6-diaminopimelate + ATP = UDP-N-acetyl-alpha-D-muramoyl-L-alanyl-gamma-D-glutamyl-meso-2,6-diaminopimelate + ADP + phosphate + H(+). It participates in cell wall biogenesis; peptidoglycan biosynthesis. Catalyzes the addition of meso-diaminopimelic acid to the nucleotide precursor UDP-N-acetylmuramoyl-L-alanyl-D-glutamate (UMAG) in the biosynthesis of bacterial cell-wall peptidoglycan. In Rickettsia felis (strain ATCC VR-1525 / URRWXCal2) (Rickettsia azadi), this protein is UDP-N-acetylmuramoyl-L-alanyl-D-glutamate--2,6-diaminopimelate ligase.